We begin with the raw amino-acid sequence, 227 residues long: Protein Saci_0792 (227 aa).

One can recognise an AMMECR1 domain in the interval 15-209 (DIGKQLIKIA…EINKNTDEII (195 aa)).

The sequence is that of Protein Saci_0792 from Sulfolobus acidocaldarius (strain ATCC 33909 / DSM 639 / JCM 8929 / NBRC 15157 / NCIMB 11770).